The sequence spans 131 residues: Translation initiation factor 5A (131 aa).

At Lys36 the chain carries Hypusine.

Belongs to the eIF-5A family. Post-translationally, the N-terminus is blocked.

It localises to the cytoplasm. Functions by promoting the formation of the first peptide bond. The sequence is that of Translation initiation factor 5A (eif5a) from Sulfolobus acidocaldarius (strain ATCC 33909 / DSM 639 / JCM 8929 / NBRC 15157 / NCIMB 11770).